Reading from the N-terminus, the 510-residue chain is ATP synthase subunit alpha (510 aa).

Residue 169–176 coordinates ATP; it reads GDRQTGKT.

The protein belongs to the ATPase alpha/beta chains family. In terms of assembly, F-type ATPases have 2 components, CF(1) - the catalytic core - and CF(0) - the membrane proton channel. CF(1) has five subunits: alpha(3), beta(3), gamma(1), delta(1), epsilon(1). CF(0) has three main subunits: a(1), b(2) and c(9-12). The alpha and beta chains form an alternating ring which encloses part of the gamma chain. CF(1) is attached to CF(0) by a central stalk formed by the gamma and epsilon chains, while a peripheral stalk is formed by the delta and b chains.

It localises to the cell inner membrane. The catalysed reaction is ATP + H2O + 4 H(+)(in) = ADP + phosphate + 5 H(+)(out). Produces ATP from ADP in the presence of a proton gradient across the membrane. The alpha chain is a regulatory subunit. In Afipia carboxidovorans (strain ATCC 49405 / DSM 1227 / KCTC 32145 / OM5) (Oligotropha carboxidovorans), this protein is ATP synthase subunit alpha.